The following is a 205-amino-acid chain: MELNGLRVSRETQERLQHFAALFQKWAKTINLVAPSTLDDLWNRHIADSSQVFQIHPKPVIWADLGSGGGFPGVITAIFLAELQDGWVHLVESNHKKAAFLRTALRETNARGSVHSSRIEDAHAEIGECGAISARALADLDGLLEYSAPWMLGEKDCRGFFHKGRDYLREIDKARGRWEFDLLEHSSAVEQESVILEISNLRRLV.

Residues Gly-66, Phe-71, 119 to 120 (IE), and Arg-135 contribute to the S-adenosyl-L-methionine site.

The protein belongs to the methyltransferase superfamily. RNA methyltransferase RsmG family.

It localises to the cytoplasm. It carries out the reaction guanosine(527) in 16S rRNA + S-adenosyl-L-methionine = N(7)-methylguanosine(527) in 16S rRNA + S-adenosyl-L-homocysteine. Specifically methylates the N7 position of guanine in position 527 of 16S rRNA. The sequence is that of Ribosomal RNA small subunit methyltransferase G from Rhizobium leguminosarum bv. trifolii (strain WSM2304).